The sequence spans 407 residues: Imidazolonepropionase (407 aa).

Fe(3+) is bound by residues His68 and His70. Positions 68 and 70 each coordinate Zn(2+). 4-imidazolone-5-propanoate-binding residues include Arg77, Tyr140, and His173. Tyr140 serves as a coordination point for N-formimidoyl-L-glutamate. His238 lines the Fe(3+) pocket. His238 is a Zn(2+) binding site. Gln241 contacts 4-imidazolone-5-propanoate. Asp313 contacts Fe(3+). Residue Asp313 participates in Zn(2+) binding. N-formimidoyl-L-glutamate-binding residues include Asn315 and Gly317. Thr318 provides a ligand contact to 4-imidazolone-5-propanoate.

The protein belongs to the metallo-dependent hydrolases superfamily. HutI family. Zn(2+) is required as a cofactor. Fe(3+) serves as cofactor.

Its subcellular location is the cytoplasm. The enzyme catalyses 4-imidazolone-5-propanoate + H2O = N-formimidoyl-L-glutamate. The protein operates within amino-acid degradation; L-histidine degradation into L-glutamate; N-formimidoyl-L-glutamate from L-histidine: step 3/3. In terms of biological role, catalyzes the hydrolytic cleavage of the carbon-nitrogen bond in imidazolone-5-propanoate to yield N-formimidoyl-L-glutamate. It is the third step in the universal histidine degradation pathway. The sequence is that of Imidazolonepropionase from Burkholderia pseudomallei (strain 1710b).